We begin with the raw amino-acid sequence, 261 residues long: Probable cyclic nucleotide phosphodiesterase PSM_A2567 (261 aa).

7 residues coordinate Fe cation: D22, H24, D62, N94, H160, H198, and H200. AMP contacts are provided by residues H24, D62, and N94–H95. Residue H200 participates in AMP binding.

Belongs to the cyclic nucleotide phosphodiesterase class-III family. The cofactor is Fe(2+).

The chain is Probable cyclic nucleotide phosphodiesterase PSM_A2567 from Pseudoalteromonas sp. (strain SM9913).